The chain runs to 100 residues: SAGA-associated factor 11 (100 aa).

An SGF11-type zinc finger spans residues 73–94; the sequence is FQCENCGRSIAGGRFAQHMTKC.

The protein belongs to the SGF11 family. As to quaternary structure, component of the 1.8 MDa SAGA transcription coactivator-HAT complex. SAGA is built of 5 distinct domains with specialized functions. Within the SAGA complex, SUS1, SGF11, SGF73 and UBP8 form an additional subcomplex of SAGA called the DUB module (deubiquitination module). Interacts directly with SGF73, SUS1 and UBP8.

Its subcellular location is the nucleus. Its function is as follows. Functions as a component of the transcription regulatory histone acetylation (HAT) complex SAGA. At the promoters, SAGA is required for recruitment of the basal transcription machinery. It influences RNA polymerase II transcriptional activity through different activities such as TBP interaction and promoter selectivity, interaction with transcription activators, and chromatin modification through histone acetylation and deubiquitination. SAGA acetylates nucleosomal histone H3 to some extent (to form H3K9ac, H3K14ac, H3K18ac and H3K23ac). SAGA interacts with DNA via upstream activating sequences (UASs). Involved in transcriptional regulation of a subset of SAGA-regulated genes. Within the SAGA complex, participates in a subcomplex, that specifically deubiquitinates histones H2B. The sequence is that of SAGA-associated factor 11 from Debaryomyces hansenii (strain ATCC 36239 / CBS 767 / BCRC 21394 / JCM 1990 / NBRC 0083 / IGC 2968) (Yeast).